We begin with the raw amino-acid sequence, 89 residues long: AGSVGRTAGGPGFTSPGRVAGGTGSPTASARGGTPGGSEGFTAAPGSESTGGHSGAPGTTLAGRAGTTLGPRSEPSGTGVGGSPVATTL.

The segment at 1–89 is disordered; the sequence is AGSVGRTAGG…VGGSPVATTL (89 aa). The O-linked (GalNAc...) serine; partial glycan is linked to Ser-3. 2 O-linked (GalNAc...) threonine; partial glycosylation sites follow: Thr-7 and Thr-14. The O-linked (GalNAc...) serine; partial glycan is linked to Ser-15. O-linked (GalNAc...) threonine; partial glycosylation occurs at Thr-23. Ser-25 carries O-linked (GalNAc...) serine; partial glycosylation. An O-linked (GalNAc...) threonine; partial glycan is attached at Thr-27. Residue Ser-29 is glycosylated (O-linked (GalNAc...) serine; partial). The O-linked (GalNAc...) threonine; partial glycan is linked to Thr-34. A glycan (O-linked (GalNAc...) serine; partial) is linked at Ser-38. O-linked (GalNAc...) threonine; partial glycosylation occurs at Thr-42. O-linked (GalNAc...) serine; partial glycosylation is found at Ser-47 and Ser-49. Thr-50 carries an O-linked (GalNAc...) threonine; partial glycan. Ser-54 carries O-linked (GalNAc...) serine; partial glycosylation. Residues 56–71 show a composition bias toward low complexity; sequence APGTTLAGRAGTTLGP. O-linked (GalNAc...) threonine; partial glycans are attached at residues Thr-59, Thr-60, Thr-67, and Thr-68. Ser-73 and Ser-76 each carry an O-linked (GalNAc...) serine; partial glycan. The O-linked (GalNAc...) threonine; partial glycan is linked to Thr-78. O-linked (GalNAc...) serine; partial glycosylation occurs at Ser-83.

Heavily O-glycosylated at most but not all Ser and Thr residues. As to expression, expressed in the submaxillary salivary gland.

The protein resides in the secreted. In Canis lupus familiaris (Dog), this protein is Submaxillary mucin.